The following is a 187-amino-acid chain: Ribosome hibernation promotion factor (187 aa).

This sequence belongs to the HPF/YfiA ribosome-associated protein family. Long HPF subfamily. In terms of assembly, interacts with 100S ribosomes.

Its subcellular location is the cytoplasm. Its function is as follows. Involved in 100S ribosome formation from 70S ribosomes; 100S ribosomes are probably translationally inactive. Ribosome hibernation may be used by the cell to decrease overall energy consumption under nutrient-limiting conditions. Unlike E.coli, 100S ribosomes are present from mid-exponential growth, peak during the transition from log to stationary phase and then decrease. The protein is Ribosome hibernation promotion factor of Listeria monocytogenes serotype 1/2a (strain 10403S).